A 448-amino-acid chain; its full sequence is Vimentin (448 aa).

The tract at residues 1–77 (PRHLEPAGSN…FSLADAINTE (77 aa)) is head. Serine 9 carries the phosphoserine modification. O-linked (GlcNAc) threonine glycosylation is present at threonine 16. Serine 17 is modified (phosphoserine; by PKC; alternate). The O-linked (GlcNAc) serine; alternate glycan is linked to serine 17. Residue serine 22 is modified to Phosphoserine; by CaMK2, PKA, PKC and ROCK2. Phosphoserine occurs at positions 29, 31, and 33. Phosphotyrosine is present on tyrosine 35. Serine 37 bears the Phosphoserine mark. The residue at position 38 (serine 38) is a Phosphoserine; by CDK5 and CDK1. Tyrosine 43 is subject to Phosphotyrosine. Position 48 is a phosphoserine; by PKA and PKC (serine 48). Residue serine 54 is modified to Phosphoserine; by AURKB and ROCK2. Serine 55 carries the phosphoserine modification. The residue at position 65 (serine 65) is a Phosphoserine; by CaMK2. A Phosphoserine modification is found at serine 69. Positions 78–113 (FKNTRTNEKVELQELNDRFADYIDKVRFLEQQNKIL) are coil 1A. Residues 78–113 (FKNTRTNEKVELQELNDRFADYIDKVRFLEQQNKIL) are a coiled coil. Positions 85–393 (EKVELQELND…KLLEGEESRI (309 aa)) constitute an IF rod domain. A Glycyl lysine isopeptide (Lys-Gly) (interchain with G-Cter in SUMO2) cross-link involves residue lysine 86. Tyrosine 99 is modified (phosphotyrosine). 3 positions are modified to N6-acetyllysine; alternate: lysine 102, lysine 111, and lysine 121. An N6-succinyllysine; alternate mark is found at lysine 102 and lysine 111. Residues lysine 102, lysine 111, and lysine 121 each participate in a glycyl lysine isopeptide (Lys-Gly) (interchain with G-Cter in SUMO2); alternate cross-link. Residues 114–135 (LAELEQLKGQGKSRLGDLYEEE) form a linker 1 region. Serine 126 is modified (phosphoserine). A coiled-coil region spans residues 136–227 (MRELRRQVDQ…KLHDEEIQEL (92 aa)). A coil 1B region spans residues 136–227 (MRELRRQVDQ…KLHDEEIQEL (92 aa)). Lysine 150 carries the N6-acetyllysine modification. An N6-acetyllysine; alternate modification is found at lysine 170. Lysine 170 bears the N6-succinyllysine; alternate mark. Serine 196 carries the post-translational modification Phosphoserine. N6-acetyllysine; alternate is present on lysine 205. Residue lysine 205 forms a Glycyl lysine isopeptide (Lys-Gly) (interchain with G-Cter in SUMO2); alternate linkage. At serine 208 the chain carries Phosphoserine. Lysine 217 carries the post-translational modification N6-acetyllysine. The linker 12 stretch occupies residues 228–250 (QAQIQEQHVQIDVDVSKPDLTAA). Residue lysine 244 forms a Glycyl lysine isopeptide (Lys-Gly) (interchain with G-Cter in SUMO2) linkage. Positions 251-389 (LRDVRQQYES…ATYRKLLEGE (139 aa)) are coil 2. Lysine 276 bears the N6-acetyllysine; alternate mark. Residue lysine 276 is modified to N6-succinyllysine; alternate. Lysine 276 is covalently cross-linked (Glycyl lysine isopeptide (Lys-Gly) (interchain with G-Cter in SUMO2); alternate). The residue at position 281 (serine 281) is a Phosphoserine. Positions 285–389 (NRNNDALRQA…ATYRKLLEGE (105 aa)) form a coiled coil. Residue lysine 295 forms a Glycyl lysine isopeptide (Lys-Gly) (interchain with G-Cter in SUMO2) linkage. Serine 307 is subject to Phosphoserine. The [IL]-x-C-x-x-[DE] motif motif lies at 308 to 311 (LTCE). An N6-acetyllysine; alternate modification is found at lysine 355. Residue lysine 355 forms a Glycyl lysine isopeptide (Lys-Gly) (interchain with G-Cter in SUMO2); alternate linkage. The tail stretch occupies residues 390-448 (ESRISLPLPNFSSLNLRETNLESLPLVDTHSKRTLLIKTVETRDGQVINETSQHHDDLE). Residues serine 391, serine 394, serine 401, and serine 402 each carry the phosphoserine modification. Threonine 408 is modified (phosphothreonine). The residue at position 412 (serine 412) is a Phosphoserine. The residue at position 418 (threonine 418) is a Phosphothreonine. Residue serine 420 is modified to Phosphoserine. Residue lysine 421 forms a Glycyl lysine isopeptide (Lys-Gly) (interchain with G-Cter in SUMO2) linkage. Lysine 427 is subject to N6-acetyllysine; alternate. At lysine 427 the chain carries N6-succinyllysine; alternate. Residue lysine 427 forms a Glycyl lysine isopeptide (Lys-Gly) (interchain with G-Cter in SUMO2); alternate linkage. Residue lysine 427 forms a Glycyl lysine isopeptide (Lys-Gly) (interchain with G-Cter in SUMO1); alternate linkage. Residues threonine 428 and threonine 440 each carry the phosphothreonine modification. A Phosphoserine modification is found at serine 441.

This sequence belongs to the intermediate filament family. In terms of assembly, homomer assembled from elementary dimers. Identified in complexes that contain VIM, EZR, AHNAK, BFSP1, BFSP2, ANK2, PLEC, PRX and spectrin. Interacts with BCAS3. Interacts with LGSN. Interacts with SYNM. Interacts (via rod region) with PLEC (via CH 1 domain). Interacts with STK33. Interacts with LARP6. Interacts with RAB8B. Interacts with TOR1A; the interaction associates TOR1A with the cytoskeleton. Interacts with TOR1AIP1. Interacts with TOR1AIP1. Interacts with DIAPH1. Interacts with EPPK1; interaction is dependent of higher-order structure of intermediate filament. Interacts with the non-receptor tyrosine kinase SRMS; the interaction leads to phosphorylation of VIM. Interacts with NOD2. Interacts (via head region) with CORO1C. Interacts with HDGF. Interacts with PRKCE (via phorbol-ester/DAG-type 2 domain). Interacts with BFSP2. Interacts with PPL. Interacts with PKP1 and PKP2. Interacts with SCRIB (via PDZ domains); the interaction protects SCRIB from proteasomal degradation and facilitates SCRIB localization to intermediate filaments, the interaction is reduced by cell contact inhibition. One of the most prominent phosphoproteins in various cells of mesenchymal origin. Phosphorylation is enhanced during cell division, at which time vimentin filaments are significantly reorganized. Phosphorylation by PKN1 inhibits the formation of filaments. Filament disassembly during mitosis is promoted by phosphorylation at Ser-37 as well as by nestin. Phosphorylated at Ser-38 by CDK5 during neutrophil secretion in the cytoplasm. Phosphorylated by STK33. Phosphorylated on tyrosine residues by SRMS. Post-translationally, S-nitrosylation is induced by interferon-gamma and oxidatively-modified low-densitity lipoprotein (LDL(ox)) possibly implicating the iNOS-S100A8/9 transnitrosylase complex.

It localises to the cytoplasm. The protein localises to the cytoskeleton. The protein resides in the nucleus matrix. It is found in the cell membrane. Its function is as follows. Vimentins are class-III intermediate filaments found in various non-epithelial cells, especially mesenchymal cells. Vimentin is attached to the nucleus, endoplasmic reticulum, and mitochondria, either laterally or terminally. Plays a role in cell directional movement, orientation, cell sheet organization and Golgi complex polarization at the cell migration front. Protects SCRIB from proteasomal degradation and facilitates its localization to intermediate filaments in a cell contact-mediated manner. Functionally, involved with LARP6 in the stabilization of type I collagen mRNAs for CO1A1 and CO1A2. The protein is Vimentin (VIM) of Cricetulus griseus (Chinese hamster).